The primary structure comprises 40 residues: Photosystem II reaction center protein J (40 aa).

The residue at position 2 (methionine 2) is an N-acetylmethionine. Topologically, residues 2–11 (MSEGGRIPLW) are cytoplasmic. A helical membrane pass occupies residues 12 to 26 (IVATVAGMGVIVIVG). Topologically, residues 27 to 40 (LFFYGAYAGLGSSL) are lumenal.

It belongs to the PsbJ family. In terms of assembly, PSII is composed of 1 copy each of membrane proteins PsbA, PsbB, PsbC, PsbD, PsbE, PsbF, PsbH, PsbI, PsbJ, PsbK, PsbL, PsbM, PsbT, PsbX, PsbY, PsbZ, Psb30/Ycf12, peripheral proteins PsbO, CyanoQ (PsbQ), PsbU, PsbV and a large number of cofactors. It forms dimeric complexes. PSII binds multiple chlorophylls, carotenoids and specific lipids. is required as a cofactor.

Its subcellular location is the cellular thylakoid membrane. One of the components of the core complex of photosystem II (PSII). PSII is a light-driven water:plastoquinone oxidoreductase that uses light energy to abstract electrons from H(2)O, generating O(2) and a proton gradient subsequently used for ATP formation. It consists of a core antenna complex that captures photons, and an electron transfer chain that converts photonic excitation into a charge separation. Functionally, may play a regulatory role in PSII biogenesis. This chain is Photosystem II reaction center protein J, found in Thermosynechococcus vestitus (strain NIES-2133 / IAM M-273 / BP-1).